The chain runs to 886 residues: Probable mixed-linked glucan synthase 8 (886 aa).

Transmembrane regions (helical) follow at residues 87-107 and 118-138; these read ILLHPYRLLTLVRLVAIVLFF and GMFFWWISVIGDFWFGVSWLL. Asp-213 is an active-site residue. Substrate is bound by residues Asp-413 and Asp-415. The active site involves Asp-577. Transmembrane regions (helical) follow at residues 659–679, 683–703, 723–743, 775–795, 812–832, and 840–860; these read VFLLFYLLFPVIWIFRGIFYI, FPTYVLYLVIVIFMSEMIGMV, IIGATAVYPLAVLHIVLKCFG, LLFPTIVVIAVNICAIGAAIG, LGLVFNVWILLLIYPFALGIM, and YILFVLIVISFVIIALADIAI.

The protein belongs to the glycosyltransferase 2 family. Plant cellulose synthase-like F subfamily.

The protein localises to the golgi apparatus membrane. May catalyze both beta-1,3 and beta-1,4 glycosidic linkage on beta-D-glucan. Essential for (1,3;1,4)-beta-D-glucans synthesis in grasses and cereals (Poaceae). The mixed-linked glucans (which are not present in walls of dicotyledons or most other monocotyledonous plants) are particularly important constituents of the walls of the starchy endosperm and aleurone cells of cereal grains such as oats, wheat, rice and barley. They can account for up to 70% by weight of the wall. This chain is Probable mixed-linked glucan synthase 8 (CSFL8), found in Oryza sativa subsp. japonica (Rice).